Reading from the N-terminus, the 190-residue chain is Crossover junction endodeoxyribonuclease RuvC (190 aa).

Residues Asp-8, Glu-67, and Asp-139 contribute to the active site. Mg(2+) contacts are provided by Asp-8, Glu-67, and Asp-139.

This sequence belongs to the RuvC family. Homodimer which binds Holliday junction (HJ) DNA. The HJ becomes 2-fold symmetrical on binding to RuvC with unstacked arms; it has a different conformation from HJ DNA in complex with RuvA. In the full resolvosome a probable DNA-RuvA(4)-RuvB(12)-RuvC(2) complex forms which resolves the HJ. Mg(2+) serves as cofactor.

The protein localises to the cytoplasm. It catalyses the reaction Endonucleolytic cleavage at a junction such as a reciprocal single-stranded crossover between two homologous DNA duplexes (Holliday junction).. In terms of biological role, the RuvA-RuvB-RuvC complex processes Holliday junction (HJ) DNA during genetic recombination and DNA repair. Endonuclease that resolves HJ intermediates. Cleaves cruciform DNA by making single-stranded nicks across the HJ at symmetrical positions within the homologous arms, yielding a 5'-phosphate and a 3'-hydroxyl group; requires a central core of homology in the junction. The consensus cleavage sequence is 5'-(A/T)TT(C/G)-3'. Cleavage occurs on the 3'-side of the TT dinucleotide at the point of strand exchange. HJ branch migration catalyzed by RuvA-RuvB allows RuvC to scan DNA until it finds its consensus sequence, where it cleaves and resolves the cruciform DNA. The sequence is that of Crossover junction endodeoxyribonuclease RuvC from Pasteurella multocida (strain Pm70).